We begin with the raw amino-acid sequence, 61 residues long: Potassium channel toxin kappa-KTx 2.8 (61 aa).

Residues 1–21 form the signal peptide; sequence GTVYVFLLLLAFGIFTDISNA. A propeptide spanning residues 22 to 35 is cleaved from the precursor; the sequence is CSEQMDDEDSYEVE. Disulfide bonds link Cys-41–Cys-59 and Cys-45–Cys-55.

This sequence belongs to the short scorpion toxin superfamily. Potassium channel inhibitor kappa-KTx family. Kappa-KTx 2 subfamily. Expressed by the venom gland.

It localises to the secreted. Its function is as follows. Voltage-gated potassium channel inhibitor (Kv) that acts on Kv1.3/KCNA3 and Kv7.1/KCNQ1. 1 uM of the toxin inhibits Kv1.3/KCNA3 currents by 35.1%, whereas 10 uM of the toxin inhibits Kv7.1/KCNQ1 currents by 44.9%. The protein is Potassium channel toxin kappa-KTx 2.8 of Heterometrus petersii (Asian forest scorpion).